The sequence spans 118 residues: Large ribosomal subunit protein uL18 (118 aa).

This sequence belongs to the universal ribosomal protein uL18 family. In terms of assembly, part of the 50S ribosomal subunit; part of the 5S rRNA/L5/L18/L25 subcomplex. Contacts the 5S and 23S rRNAs.

This is one of the proteins that bind and probably mediate the attachment of the 5S RNA into the large ribosomal subunit, where it forms part of the central protuberance. The polypeptide is Large ribosomal subunit protein uL18 (Campylobacter concisus (strain 13826)).